The primary structure comprises 415 residues: Branched-chain-amino-acid aminotransferase 5, chloroplastic (415 aa).

A chloroplast-targeting transit peptide spans 1-65; the sequence is MERSAVASGF…IVSEVSRNRR (65 aa). Lys-261 carries the post-translational modification N6-(pyridoxal phosphate)lysine.

Belongs to the class-IV pyridoxal-phosphate-dependent aminotransferase family. It depends on pyridoxal 5'-phosphate as a cofactor.

It is found in the plastid. Its subcellular location is the chloroplast. It catalyses the reaction L-leucine + 2-oxoglutarate = 4-methyl-2-oxopentanoate + L-glutamate. It carries out the reaction L-isoleucine + 2-oxoglutarate = (S)-3-methyl-2-oxopentanoate + L-glutamate. The enzyme catalyses L-valine + 2-oxoglutarate = 3-methyl-2-oxobutanoate + L-glutamate. Its pathway is amino-acid biosynthesis; L-isoleucine biosynthesis; L-isoleucine from 2-oxobutanoate: step 4/4. It functions in the pathway amino-acid biosynthesis; L-leucine biosynthesis; L-leucine from 3-methyl-2-oxobutanoate: step 4/4. The protein operates within amino-acid biosynthesis; L-valine biosynthesis; L-valine from pyruvate: step 4/4. Functionally, converts 2-oxo acids to branched-chain amino acids. Acts on leucine, isoleucine and valine. This chain is Branched-chain-amino-acid aminotransferase 5, chloroplastic (BCAT5), found in Arabidopsis thaliana (Mouse-ear cress).